Consider the following 49-residue polypeptide: Glutathione peroxidase (49 aa).

The protein belongs to the glutathione peroxidase family.

The enzyme catalyses 2 glutathione + H2O2 = glutathione disulfide + 2 H2O. Inhibited by Cu(2+), SDS and DTT. Activity is slightly increased by Fe(2+), Mn(2+), triton X-100 and EDTA. Its function is as follows. Glutathione peroxidase which may protect the cell from oxidative damage. The protein is Glutathione peroxidase of Lactiplantibacillus plantarum (Lactobacillus plantarum).